Here is a 439-residue protein sequence, read N- to C-terminus: Putative phosphatidate cytidylyltransferase (439 aa).

A disordered region spans residues 1–37; the sequence is MARKRTNKRNNSDKENGNVGVVQNKDSASSKTTEPAR. Ser12 carries the post-translational modification Phosphoserine. Over residues 24 to 33 the composition is skewed to polar residues; that stretch reads NKDSASSKTT. The next 7 helical transmembrane spans lie at 52–71, 76–98, 110–130, 145–165, 180–199, 245–265, and 321–341; these read FITR…TALA, WVVL…IASV, FINW…SIYA, LVLH…VLFV, FCWT…FMIN, GFLG…YVLM, and FHLA…GFFA.

The protein belongs to the CDS family. The cofactor is Mg(2+).

It is found in the endoplasmic reticulum membrane. It carries out the reaction a 1,2-diacyl-sn-glycero-3-phosphate + CTP + H(+) = a CDP-1,2-diacyl-sn-glycerol + diphosphate. It participates in phospholipid metabolism; CDP-diacylglycerol biosynthesis; CDP-diacylglycerol from sn-glycerol 3-phosphate: step 3/3. In terms of biological role, supplies CDP-diacylglycerol, which may play an important role as both a precursor to phosphoinositide biosynthesis in the plasma membrane and as a negative effector of phosphatidylinositol 4-kinase activity, thereby exerting an effect on cell proliferation via a lipid-dependent signal transduction cascade. The polypeptide is Putative phosphatidate cytidylyltransferase (Schizosaccharomyces pombe (strain 972 / ATCC 24843) (Fission yeast)).